We begin with the raw amino-acid sequence, 270 residues long: Carboxy-S-adenosyl-L-methionine synthase (270 aa).

S-adenosyl-L-methionine is bound by residues Tyr65, 90–92, 143–144, Asn158, and Arg225; these read GCS and DI.

This sequence belongs to the class I-like SAM-binding methyltransferase superfamily. Cx-SAM synthase family. Homodimer.

It catalyses the reaction prephenate + S-adenosyl-L-methionine = carboxy-S-adenosyl-L-methionine + 3-phenylpyruvate + H2O. In terms of biological role, catalyzes the conversion of S-adenosyl-L-methionine (SAM) to carboxy-S-adenosyl-L-methionine (Cx-SAM). This is Carboxy-S-adenosyl-L-methionine synthase from Chromohalobacter salexigens (strain ATCC BAA-138 / DSM 3043 / CIP 106854 / NCIMB 13768 / 1H11).